The primary structure comprises 617 residues: 1-deoxy-D-xylulose-5-phosphate synthase (617 aa).

Thiamine diphosphate-binding positions include His76 and 117–119; that span reads GHS. Asp148 contacts Mg(2+). Thiamine diphosphate is bound by residues 149 to 150, Asn177, Tyr285, and Glu366; that span reads GA. Position 177 (Asn177) interacts with Mg(2+).

This sequence belongs to the transketolase family. DXPS subfamily. As to quaternary structure, homodimer. Requires Mg(2+) as cofactor. The cofactor is thiamine diphosphate.

It carries out the reaction D-glyceraldehyde 3-phosphate + pyruvate + H(+) = 1-deoxy-D-xylulose 5-phosphate + CO2. The protein operates within metabolic intermediate biosynthesis; 1-deoxy-D-xylulose 5-phosphate biosynthesis; 1-deoxy-D-xylulose 5-phosphate from D-glyceraldehyde 3-phosphate and pyruvate: step 1/1. Functionally, catalyzes the acyloin condensation reaction between C atoms 2 and 3 of pyruvate and glyceraldehyde 3-phosphate to yield 1-deoxy-D-xylulose-5-phosphate (DXP). This is 1-deoxy-D-xylulose-5-phosphate synthase from Histophilus somni (strain 129Pt) (Haemophilus somnus).